The following is a 102-amino-acid chain: Small ribosomal subunit protein uS10 (102 aa).

It belongs to the universal ribosomal protein uS10 family. As to quaternary structure, part of the 30S ribosomal subunit.

Functionally, involved in the binding of tRNA to the ribosomes. This chain is Small ribosomal subunit protein uS10, found in Finegoldia magna (strain ATCC 29328 / DSM 20472 / WAL 2508) (Peptostreptococcus magnus).